Reading from the N-terminus, the 378-residue chain is Acetylornithine deacetylase (378 aa).

His76 lines the Zn(2+) pocket. Asp78 is a catalytic residue. Asp108 contacts Zn(2+). Residue Glu140 is part of the active site. Zn(2+) is bound by residues Glu141, Glu165, and His351.

The protein belongs to the peptidase M20A family. ArgE subfamily. Homodimer. It depends on Zn(2+) as a cofactor. Co(2+) is required as a cofactor. The cofactor is glutathione.

It is found in the cytoplasm. It catalyses the reaction N(2)-acetyl-L-ornithine + H2O = L-ornithine + acetate. The protein operates within amino-acid biosynthesis; L-arginine biosynthesis; L-ornithine from N(2)-acetyl-L-ornithine (linear): step 1/1. In terms of biological role, catalyzes the hydrolysis of the amide bond of N(2)-acetylated L-amino acids. Cleaves the acetyl group from N-acetyl-L-ornithine to form L-ornithine, an intermediate in L-arginine biosynthesis pathway, and a branchpoint in the synthesis of polyamines. The polypeptide is Acetylornithine deacetylase (Vibrio parahaemolyticus serotype O3:K6 (strain RIMD 2210633)).